The sequence spans 505 residues: Midnolin (505 aa).

The 75-residue stretch at Met32–Gly106 folds into the Ubiquitin-like domain. Disordered regions lie at residues Pro155 to Phe176, Ser228 to Pro305, and Arg440 to Phe485. A compositionally biased stretch (low complexity) spans Arg238 to Val262. Positions Thr263–Cys282 are enriched in polar residues. Residues Ser283–Pro300 are compositionally biased toward low complexity.

Interacts with GCK; the interaction occurs preferentially at low glucose levels. Interacts with the proteasome.

The protein resides in the nucleus. Its subcellular location is the cytoplasm. The protein localises to the cytosol. It is found in the nucleolus. Facilitates the ubiquitin-independent proteasomal degradation of stimulus-induced transcription factors such as FOSB, EGR1, NR4A1, and IRF4 to the proteasome for degradation. Promotes also the degradation of other substrates such as CBX4. Plays a role in inhibiting the activity of glucokinase GCK and both glucose-induced and basal insulin secretion. This Rattus norvegicus (Rat) protein is Midnolin.